The chain runs to 388 residues: Probable proton-coupled zinc antiporter SLC30A3 (388 aa).

The segment at 1–42 (MEPSPASGGSETTRLVSPRDRSSAGGGLRLKSLFTEPSEPLP) is disordered. Residues 1-75 (MEPSPASGGS…SPERAQARRQ (75 aa)) lie on the Cytoplasmic side of the membrane. Phosphoserine occurs at positions 63 and 66. Residues 76-96 (LYAACVVCFIFMAGEVVGGYL) traverse the membrane as a helical segment. Over 97 to 105 (AHSLAIMTD) the chain is Lumenal. A helical membrane pass occupies residues 106 to 126 (AAHLLADIGSMMASLFSLWLS). Zn(2+)-binding residues include histidine 108 and aspartate 112. Residues 127-145 (TRPATRTMTFGWHRSETLG) are Cytoplasmic-facing. Residues 146–166 (ALASVVSLWIVTGILLYLAFL) traverse the membrane as a helical segment. Topologically, residues 167-177 (RLLHSDYHIEA) are lumenal. Residues 178–198 (GAMLLTASIAVCANMIMAFVL) traverse the membrane as a helical segment. At 199 to 235 (HQTGAPHSHGPRGAEYAPLEEGHGHPLSLGNTSVRAA) the chain is on the cytoplasmic side. Residues 236-256 (FVHVLGDLLQSLGVLAASILI) traverse the membrane as a helical segment. Residues histidine 238 and aspartate 242 each contribute to the Zn(2+) site. Topologically, residues 257–263 (YFKPQYK) are lumenal. Residues 264–284 (VADPISTFLFSICALGSTAPT) traverse the membrane as a helical segment. The Cytoplasmic segment spans residues 285-388 (LRDVLLVLME…CLRCREPPKA (104 aa)).

Belongs to the cation diffusion facilitator (CDF) transporter (TC 2.A.4) family. SLC30A subfamily. Homodimer. Homodimerization could regulate efficiency of zinc transport. Interacts with TMEM163.

The protein localises to the cytoplasmic vesicle. The protein resides in the secretory vesicle. It localises to the synaptic vesicle membrane. Its subcellular location is the synapse. It is found in the synaptosome. The protein localises to the late endosome membrane. The protein resides in the lysosome membrane. The catalysed reaction is Zn(2+)(in) + 2 H(+)(out) = Zn(2+)(out) + 2 H(+)(in). In terms of biological role, probable proton-coupled zinc ion antiporter mediating the import of zinc from cytoplasm into synaptic vesicles and participating to cellular zinc ion homeostasis in the brain. This chain is Probable proton-coupled zinc antiporter SLC30A3, found in Rattus norvegicus (Rat).